The chain runs to 221 residues: Lipoprotein-releasing system ATP-binding protein LolD (221 aa).

Residues 8–220 (LKMISKHYKQ…YNLKHGLLNI (213 aa)) form the ABC transporter domain. Position 42–49 (42–49 (GSSGSGKS)) interacts with ATP.

Belongs to the ABC transporter superfamily. Lipoprotein translocase (TC 3.A.1.125) family. In terms of assembly, the complex is composed of two ATP-binding proteins (LolD) and two transmembrane proteins (LolC and LolE).

Its subcellular location is the cell inner membrane. Part of the ABC transporter complex LolCDE involved in the translocation of mature outer membrane-directed lipoproteins, from the inner membrane to the periplasmic chaperone, LolA. Responsible for the formation of the LolA-lipoprotein complex in an ATP-dependent manner. This is Lipoprotein-releasing system ATP-binding protein LolD from Rickettsia prowazekii (strain Madrid E).